Here is a 325-residue protein sequence, read N- to C-terminus: Sel1-repeat-containing protein YbeQ (325 aa).

8 Sel1-like repeats span residues 26 to 61 (EAQY…EQGH), 63 to 97 (EAQY…LQGH), 103 to 130 (ALGW…AESG), 132 to 167 (SYAQ…LQGH), 168 to 203 (SDAQ…QQGN), 205 to 239 (HAQF…AQGS), 242 to 275 (AYVN…ECND), and 280 to 305 (YNLA…LYRK).

It to E.coli YbeT.

This Escherichia coli (strain K12) protein is Sel1-repeat-containing protein YbeQ (ybeQ).